The following is a 233-amino-acid chain: MTSPMGPTARDFWQNSRNSATIQRLIVSPMQTTALSSDLNSTYTPGEAHGHHGHPDLRMFGVVLFLVAESAIFLGLFTAYLIYRSVMPAWPPEGTPELELLLPGVNSIILISSSFVMHKGQAAIRNNDNAGLQKWFGITAAMGIIFLAGQMYEYFHLEMGLTTNLFASCFYVLTGFHGLHVTFGLLLILSVLWRSRQPGHYSRTSHFGVEAAELYWHFVDVVWIVLFILVYLL.

The next 4 helical transmembrane spans lie at 62–82, 98–118, 135–155, and 172–192; these read VVLF…AYLI, LELL…FVMH, WFGI…YEYF, and VLTG…LSVL.

Belongs to the cytochrome c oxidase subunit 3 family.

It is found in the cell membrane. The catalysed reaction is 4 Fe(II)-[cytochrome c] + O2 + 8 H(+)(in) = 4 Fe(III)-[cytochrome c] + 2 H2O + 4 H(+)(out). This Synechocystis sp. (strain ATCC 27184 / PCC 6803 / Kazusa) protein is Cytochrome c oxidase subunit 3 (ctaE).